We begin with the raw amino-acid sequence, 236 residues long: Ubiquinone biosynthesis O-methyltransferase (236 aa).

Residues Arg39, Gly59, Asp80, and Met124 each contribute to the S-adenosyl-L-methionine site.

This sequence belongs to the methyltransferase superfamily. UbiG/COQ3 family.

It carries out the reaction a 3-demethylubiquinol + S-adenosyl-L-methionine = a ubiquinol + S-adenosyl-L-homocysteine + H(+). The catalysed reaction is a 3-(all-trans-polyprenyl)benzene-1,2-diol + S-adenosyl-L-methionine = a 2-methoxy-6-(all-trans-polyprenyl)phenol + S-adenosyl-L-homocysteine + H(+). It participates in cofactor biosynthesis; ubiquinone biosynthesis. O-methyltransferase that catalyzes the 2 O-methylation steps in the ubiquinone biosynthetic pathway. This chain is Ubiquinone biosynthesis O-methyltransferase, found in Shewanella sp. (strain ANA-3).